The following is a 407-amino-acid chain: Protease ElaD (407 aa).

Residue His231 is part of the active site. Residue Cys317 is the Nucleophile of the active site.

This sequence belongs to the peptidase C79 family.

Its function is as follows. Protease that can act as an efficient and specific deubiquitinating enzyme in vitro. Does not possess desumoylating and deneddylating activities. The physiological substrate is unknown. The sequence is that of Protease ElaD (elaD) from Escherichia coli O157:H7.